Consider the following 59-residue polypeptide: Small ribosomal subunit protein eS17 (59 aa).

The protein belongs to the eukaryotic ribosomal protein eS17 family.

The protein is Small ribosomal subunit protein eS17 of Halobacterium salinarum (strain ATCC 29341 / DSM 671 / R1).